Consider the following 332-residue polypeptide: Glycerol-3-phosphate dehydrogenase [NAD(P)+] (332 aa).

NADPH is bound by residues Trp-13, Lys-34, and Lys-108. Sn-glycerol 3-phosphate is bound by residues Lys-108, Gly-136, and Ser-138. Residue Ala-140 coordinates NADPH. Residues Lys-191, Asp-244, Ser-254, Arg-255, and Asn-256 each coordinate sn-glycerol 3-phosphate. The active-site Proton acceptor is the Lys-191. Arg-255 provides a ligand contact to NADPH. NADPH contacts are provided by Val-279 and Glu-281.

The protein belongs to the NAD-dependent glycerol-3-phosphate dehydrogenase family.

It is found in the cytoplasm. It catalyses the reaction sn-glycerol 3-phosphate + NAD(+) = dihydroxyacetone phosphate + NADH + H(+). The catalysed reaction is sn-glycerol 3-phosphate + NADP(+) = dihydroxyacetone phosphate + NADPH + H(+). It functions in the pathway membrane lipid metabolism; glycerophospholipid metabolism. Catalyzes the reduction of the glycolytic intermediate dihydroxyacetone phosphate (DHAP) to sn-glycerol 3-phosphate (G3P), the key precursor for phospholipid synthesis. This Francisella tularensis subsp. holarctica (strain FTNF002-00 / FTA) protein is Glycerol-3-phosphate dehydrogenase [NAD(P)+].